A 127-amino-acid polypeptide reads, in one-letter code: Fluoride-specific ion channel FluC (127 aa).

Transmembrane regions (helical) follow at residues 8–28, 37–57, 68–88, and 100–120; these read LLIA…QYWF, PWGT…VYAI, WKFL…TFSY, and ILFL…AFAG. Residues Gly78 and Thr81 each contribute to the Na(+) site.

It belongs to the fluoride channel Fluc/FEX (TC 1.A.43) family.

The protein localises to the cell inner membrane. The catalysed reaction is fluoride(in) = fluoride(out). Its activity is regulated as follows. Na(+) is not transported, but it plays an essential structural role and its presence is essential for fluoride channel function. Its function is as follows. Fluoride-specific ion channel. Important for reducing fluoride concentration in the cell, thus reducing its toxicity. The protein is Fluoride-specific ion channel FluC of Leptospira interrogans serogroup Icterohaemorrhagiae serovar Lai (strain 56601).